The sequence spans 164 residues: Thiol peroxidase (164 aa).

Residues 18–163 (INEGDFAPDF…FDAALAAYKN (146 aa)) enclose the Thioredoxin domain. The active-site Cysteine sulfenic acid (-SOH) intermediate is the Cys-60. The cysteines at positions 60 and 93 are disulfide-linked.

The protein belongs to the peroxiredoxin family. Tpx subfamily. As to quaternary structure, homodimer.

It carries out the reaction a hydroperoxide + [thioredoxin]-dithiol = an alcohol + [thioredoxin]-disulfide + H2O. Its function is as follows. Thiol-specific peroxidase that catalyzes the reduction of hydrogen peroxide and organic hydroperoxides to water and alcohols, respectively. Plays a role in cell protection against oxidative stress by detoxifying peroxides. This Staphylococcus aureus (strain MRSA252) protein is Thiol peroxidase.